A 299-amino-acid chain; its full sequence is Taste receptor type 2 member 4 (299 aa).

Topologically, residues 1-9 (MLRLFYFSA) are extracellular. A helical transmembrane segment spans residues 10–30 (IIASVILNFVGIIMNLFITVV). The Cytoplasmic segment spans residues 31–46 (NCKTWVKSHRISSSDR). A helical membrane pass occupies residues 47-67 (ILFSLGITRFLMLGLFLVNTI). The Extracellular segment spans residues 68 to 81 (YFVSSNTERSVYLS). The helical transmembrane segment at 82–102 (AFFVLCFMFLDSSSLWFVTLL) threads the bilayer. The Cytoplasmic portion of the chain corresponds to 103–131 (NILYCVKITNFQHSVFLLLKRNISPKIPR). Residues 132-152 (LLLACVLISAFTTCLYITLSQ) traverse the membrane as a helical segment. The Extracellular portion of the chain corresponds to 153–172 (ASPFPELVTTRNNTSFNINE). 2 N-linked (GlcNAc...) asparagine glycosylation sites follow: Asn-164 and Asn-165. The helical transmembrane segment at 173–193 (GILSLVVSLVLSSSLQFIINV) threads the bilayer. Residues 194–230 (TSASLLIHSLRRHIQKMQKNATGFWNPQTEAHVGAMK) are Cytoplasmic-facing. A helical transmembrane segment spans residues 231–251 (LMVYFLILYIPYSVATLVQYL). Residues 252 to 262 (PFYAGMDMGTK) are Extracellular-facing. Residues 263–283 (SICLIFATLYSPGHSVLIIIT) form a helical membrane-spanning segment. The Cytoplasmic portion of the chain corresponds to 284-299 (HPKLKTTAKKILCFKK).

Belongs to the G-protein coupled receptor T2R family.

It is found in the membrane. It localises to the cell projection. The protein localises to the cilium membrane. Its function is as follows. Gustducin-coupled receptor implicated in the perception of bitter compounds in the oral cavity and the gastrointestinal tract. Signals through PLCB2 and the calcium-regulated cation channel TRPM5. In airway epithelial cells, binding of denatonium increases the intracellular calcium ion concentration and stimulates ciliary beat frequency. The sequence is that of Taste receptor type 2 member 4 (TAS2R4) from Pan paniscus (Pygmy chimpanzee).